Here is a 131-residue protein sequence, read N- to C-terminus: Holo-[acyl-carrier-protein] synthase (131 aa).

Mg(2+) is bound by residues D8 and E59.

It belongs to the P-Pant transferase superfamily. AcpS family. Mg(2+) serves as cofactor.

It is found in the cytoplasm. It catalyses the reaction apo-[ACP] + CoA = holo-[ACP] + adenosine 3',5'-bisphosphate + H(+). In terms of biological role, transfers the 4'-phosphopantetheine moiety from coenzyme A to a Ser of acyl-carrier-protein. This Paramagnetospirillum magneticum (strain ATCC 700264 / AMB-1) (Magnetospirillum magneticum) protein is Holo-[acyl-carrier-protein] synthase.